Consider the following 148-residue polypeptide: Cell division protein SepF (148 aa).

It belongs to the SepF family. Homodimer. Interacts with FtsZ.

It is found in the cytoplasm. In terms of biological role, cell division protein that is part of the divisome complex and is recruited early to the Z-ring. Probably stimulates Z-ring formation, perhaps through the cross-linking of FtsZ protofilaments. Its function overlaps with FtsA. The chain is Cell division protein SepF from Alkaliphilus metalliredigens (strain QYMF).